A 78-amino-acid chain; its full sequence is MTRHLIFAAVLLVCLFVCWNAIGAQDARSAFSSEETAQDQHVMEERIFINPAGNREKNACLENCRSSPNCKNYEFCSK.

Residues 1–24 (MTRHLIFAAVLLVCLFVCWNAIGA) form the signal peptide. The propeptide occupies 25–28 (QDAR).

Belongs to the scoloptoxin-04 family. Contains 2 disulfide bonds. As to expression, expressed by the venom gland.

It localises to the secreted. The protein is U-scoloptoxin(04)-Er1a of Ethmostigmus rubripes (Giant centipede).